The sequence spans 130 residues: Arginine decarboxylase proenzyme (130 aa).

S78 serves as the catalytic Schiff-base intermediate with substrate; via pyruvic acid. Residue S78 is modified to Pyruvic acid (Ser); by autocatalysis. The Proton acceptor; for processing activity role is filled by H83. C98 (proton donor; for catalytic activity) is an active-site residue.

Belongs to the prokaryotic AdoMetDC family. Type 1 subfamily. In terms of assembly, heterooctamer of four alpha and four beta chains arranged as a tetramer of alpha/beta heterodimers. The cofactor is pyruvate. Post-translationally, is synthesized initially as an inactive proenzyme. Formation of the active enzyme involves a self-maturation process in which the active site pyruvoyl group is generated from an internal serine residue via an autocatalytic post-translational modification. Two non-identical subunits are generated from the proenzyme in this reaction, and the pyruvate is formed at the N-terminus of the alpha chain, which is derived from the carboxyl end of the proenzyme. The post-translation cleavage follows an unusual pathway, termed non-hydrolytic serinolysis, in which the side chain hydroxyl group of the serine supplies its oxygen atom to form the C-terminus of the beta chain, while the remainder of the serine residue undergoes an oxidative deamination to produce ammonia and the pyruvoyl group blocking the N-terminus of the alpha chain.

It carries out the reaction L-arginine + H(+) = agmatine + CO2. It participates in amine and polyamine biosynthesis; agmatine biosynthesis; agmatine from L-arginine: step 1/1. Specifically catalyzes the decarboxylation of L-arginine to agmatine. Has no S-adenosylmethionine decarboxylase (AdoMetDC) activity. The chain is Arginine decarboxylase proenzyme from Sulfolobus acidocaldarius (strain ATCC 33909 / DSM 639 / JCM 8929 / NBRC 15157 / NCIMB 11770).